A 418-amino-acid polypeptide reads, in one-letter code: Light-independent protochlorophyllide reductase subunit N (418 aa).

Residues Cys-17, Cys-42, and Cys-103 each coordinate [4Fe-4S] cluster.

The protein belongs to the BchN/ChlN family. As to quaternary structure, protochlorophyllide reductase is composed of three subunits; ChlL, ChlN and ChlB. Forms a heterotetramer of two ChlB and two ChlN subunits. Requires [4Fe-4S] cluster as cofactor.

The enzyme catalyses chlorophyllide a + oxidized 2[4Fe-4S]-[ferredoxin] + 2 ADP + 2 phosphate = protochlorophyllide a + reduced 2[4Fe-4S]-[ferredoxin] + 2 ATP + 2 H2O. It functions in the pathway porphyrin-containing compound metabolism; chlorophyll biosynthesis (light-independent). Functionally, component of the dark-operative protochlorophyllide reductase (DPOR) that uses Mg-ATP and reduced ferredoxin to reduce ring D of protochlorophyllide (Pchlide) to form chlorophyllide a (Chlide). This reaction is light-independent. The NB-protein (ChlN-ChlB) is the catalytic component of the complex. This chain is Light-independent protochlorophyllide reductase subunit N, found in Prochlorococcus marinus (strain MIT 9312).